The chain runs to 329 residues: Protein SPATA31F3 (329 aa).

Residues 11–31 (VGYSVYTYGSIFIIALIIWQV) traverse the membrane as a helical segment. Residues 58-85 (SDRATRAKRTSKEEAEKLQKLLDTMKSQ) adopt a coiled-coil conformation. Disordered regions lie at residues 149-184 (ADRS…RSAT), 201-250 (QQLD…AAPT), and 288-329 (KPMT…KRNI). 2 positions are modified to phosphoserine: Ser152 and Ser153. Polar residues-rich tracts occupy residues 154 to 184 (ELTY…RSAT) and 201 to 223 (QQLD…SSTD). A compositionally biased stretch (basic residues) spans 232–242 (QKKRKKTKKLA). Basic and acidic residues predominate over residues 293–320 (EPEKTHSPVRDQAEGAEKKKKPECDLKA).

Belongs to the SPATA31 family.

The protein resides in the membrane. The polypeptide is Protein SPATA31F3 (Rattus norvegicus (Rat)).